The sequence spans 404 residues: UPF0261 protein CTC_01794 (404 aa).

It belongs to the UPF0261 family.

The sequence is that of UPF0261 protein CTC_01794 from Clostridium tetani (strain Massachusetts / E88).